Consider the following 374-residue polypeptide: Phosphate acyltransferase (374 aa).

It belongs to the PlsX family. Homodimer. Probably interacts with PlsY.

The protein localises to the cytoplasm. It catalyses the reaction a fatty acyl-[ACP] + phosphate = an acyl phosphate + holo-[ACP]. The protein operates within lipid metabolism; phospholipid metabolism. In terms of biological role, catalyzes the reversible formation of acyl-phosphate (acyl-PO(4)) from acyl-[acyl-carrier-protein] (acyl-ACP). This enzyme utilizes acyl-ACP as fatty acyl donor, but not acyl-CoA. This is Phosphate acyltransferase from Gluconacetobacter diazotrophicus (strain ATCC 49037 / DSM 5601 / CCUG 37298 / CIP 103539 / LMG 7603 / PAl5).